The primary structure comprises 270 residues: Cyclic AMP-dependent transcription factor ATF-1 (270 aa).

The interval 1-91 (MEDSHKSNTS…DGENPGVSAV (91 aa)) is disordered. Residues 9 to 21 (TSETAPQSGSTVQ) are compositionally biased toward polar residues. The region spanning 31–90 (QVSSLSESEESQDSSDSIGSSQKTHGILARRPSYRKILKDLSSEDIRGRKGDGENPGVSA) is the KID domain. A Phosphoserine; by CaMK1, CDK3, RPS6KA4 and RPS6KA5 modification is found at Ser-63. The segment covering 67 to 83 (ILKDLSSEDIRGRKGDG) has biased composition (basic and acidic residues). At Ser-197 the chain carries Phosphoserine; by HIPK2. Glycyl lysine isopeptide (Lys-Gly) (interchain with G-Cter in SUMO2) cross-links involve residues Lys-207 and Lys-214. The 59-residue stretch at 212–270 (QLKREIRLMKNREAARECRRKKKEYVKCLENRVAVLENQNKTLIEELKTLKDLYSNKSV) folds into the bZIP domain. The basic motif stretch occupies residues 214 to 238 (KREIRLMKNREAARECRRKKKEYVK). The interval 240–261 (LENRVAVLENQNKTLIEELKTL) is leucine-zipper.

It belongs to the bZIP family. ATF subfamily. As to quaternary structure, binds DNA as a dimer. Interacts with HIPK2 and CDK3. Interacts with MOTS-c, a peptide produced by the mitochondrially encoded 12S rRNA MT-RNR1; the interaction occurs in the nucleus following metabolic stress. Phosphorylated at Ser-197 by HIPK2 in response to genotoxic stress. This phosphorylation promotes transcription repression of FTH1 and other antioxidant detoxification genes. The CDK3-mediated phosphorylation at Ser-63 promotes its transactivation and transcriptional activities. Phosphorylated at Ser-63 by RPS6KA4 and RPS6KA5 in response to mitogenic or stress stimuli.

The protein localises to the nucleus. In terms of biological role, this protein binds the cAMP response element (CRE) (consensus: 5'-GTGACGT[AC][AG]-3'), a sequence present in many viral and cellular promoters. Mediates PKA-induced stimulation of CRE-reporter genes. Represses the expression of FTH1 and other antioxidant detoxification genes. Triggers cell proliferation and transformation. This chain is Cyclic AMP-dependent transcription factor ATF-1 (ATF1), found in Bos taurus (Bovine).